A 241-amino-acid chain; its full sequence is Phosphoglycolate phosphatase (241 aa).

Asp-8 (nucleophile) is an active-site residue. Mg(2+)-binding residues include Asp-8, Asp-10, and Asp-174.

This sequence belongs to the HAD-like hydrolase superfamily. CbbY/CbbZ/Gph/YieH family. Mg(2+) is required as a cofactor.

The enzyme catalyses 2-phosphoglycolate + H2O = glycolate + phosphate. It functions in the pathway organic acid metabolism; glycolate biosynthesis; glycolate from 2-phosphoglycolate: step 1/1. Its function is as follows. Specifically catalyzes the dephosphorylation of 2-phosphoglycolate. Is involved in the dissimilation of the intracellular 2-phosphoglycolate formed during the DNA repair of 3'-phosphoglycolate ends, a major class of DNA lesions induced by oxidative stress. This is Phosphoglycolate phosphatase from Rhodospirillum rubrum (strain ATCC 11170 / ATH 1.1.1 / DSM 467 / LMG 4362 / NCIMB 8255 / S1).